A 301-amino-acid polypeptide reads, in one-letter code: Probable alpha-L-glutamate ligase (301 aa).

The 184-residue stretch at 104–287 (LQLLSRRGVG…VAGLIIQYLE (184 aa)) folds into the ATP-grasp domain. ATP-binding positions include lysine 141, 178–179 (EY), aspartate 187, and 211–213 (RSN). Positions 248, 260, and 262 each coordinate Mg(2+). Mn(2+) is bound by residues aspartate 248, glutamate 260, and asparagine 262.

This sequence belongs to the RimK family. Mg(2+) is required as a cofactor. It depends on Mn(2+) as a cofactor.

The polypeptide is Probable alpha-L-glutamate ligase (Stutzerimonas stutzeri (strain A1501) (Pseudomonas stutzeri)).